We begin with the raw amino-acid sequence, 318 residues long: NADH-ubiquinone oxidoreductase chain 1 (318 aa).

A run of 8 helical transmembrane segments spans residues 2 to 22 (PMIN…FLML), 76 to 96 (ALAL…IPLI), 100 to 120 (LGLL…LWSG), 146 to 166 (LALI…SALI), 171 to 191 (HSWL…STLA), 222 to 242 (LFFM…TMIF), 253 to 273 (ELYT…FLWI), and 294 to 314 (LPLT…TSGI).

The protein belongs to the complex I subunit 1 family. As to quaternary structure, core subunit of respiratory chain NADH dehydrogenase (Complex I) which is composed of 45 different subunits.

The protein resides in the mitochondrion inner membrane. It carries out the reaction a ubiquinone + NADH + 5 H(+)(in) = a ubiquinol + NAD(+) + 4 H(+)(out). Functionally, core subunit of the mitochondrial membrane respiratory chain NADH dehydrogenase (Complex I) which catalyzes electron transfer from NADH through the respiratory chain, using ubiquinone as an electron acceptor. Essential for the catalytic activity and assembly of complex I. This Pongo abelii (Sumatran orangutan) protein is NADH-ubiquinone oxidoreductase chain 1 (MT-ND1).